A 230-amino-acid chain; its full sequence is MGQKVHPNGIRLGITKPWISTWYADKSDYASNLNSDWEVRKFLVEKLQAASVSKIVIERPAKSIRVTIHTARPGVVIGKKGEDVEVLRAAVSKLAGTPAQINIAEIRKPELDAKLVADSIAQQLERRVMFRRAMKRAVQNAMRIGAQGIKVQVSGRLGGAEIARDEWYREGRVPLHTLRADIDYSTSESHTQYGVIGVKVWIFKGEVLDGMLPQIEEPKQQQPKRKPRGK.

In terms of domain architecture, KH type-2 spans 39–107 (VRKFLVEKLQ…PAQINIAEIR (69 aa)).

It belongs to the universal ribosomal protein uS3 family. In terms of assembly, part of the 30S ribosomal subunit. Forms a tight complex with proteins S10 and S14.

Its function is as follows. Binds the lower part of the 30S subunit head. Binds mRNA in the 70S ribosome, positioning it for translation. The polypeptide is Small ribosomal subunit protein uS3 (Shewanella baltica (strain OS223)).